A 244-amino-acid chain; its full sequence is MAKKGPKRHLKRLAAPVRWELPRKIHKFTVRPLPGAHPMSESLPLLLIVRDILKYADNAREAKKIIKMGKVLVDGRVRKEEKLPVGLMDVVSLPDANENYRVLFDRKGRIKLKPTENPDVKLCKIKNKTVIKGGHIQLNLHDGRNIVIKVSDPTKAEEDVYKTGDTLLISIPEQEIKAHIPFEVGKLAYITGGKHVGDFAKIVEIERRGIYPDIVTLENMDGEKFKTVKDYVFVVGDEEPIIKL.

The S4 RNA-binding domain occupies 43–108 (LPLLLIVRDI…NYRVLFDRKG (66 aa)).

It belongs to the eukaryotic ribosomal protein eS4 family.

This Methanocaldococcus jannaschii (strain ATCC 43067 / DSM 2661 / JAL-1 / JCM 10045 / NBRC 100440) (Methanococcus jannaschii) protein is Small ribosomal subunit protein eS4 (rps4e).